The chain runs to 485 residues: D-alanine--D-alanyl carrier protein ligase (485 aa).

Position 144 to 145 (threonine 144 to serine 145) interacts with ATP. Residue aspartate 189 participates in D-alanine binding. Asparagine 284 to threonine 289 contributes to the ATP binding site. Residue valine 293 coordinates D-alanine. Residues aspartate 365 and lysine 473 each coordinate ATP. A D-alanine-binding site is contributed by lysine 473.

This sequence belongs to the ATP-dependent AMP-binding enzyme family. DltA subfamily.

It localises to the cytoplasm. It carries out the reaction holo-[D-alanyl-carrier protein] + D-alanine + ATP = D-alanyl-[D-alanyl-carrier protein] + AMP + diphosphate. It functions in the pathway cell wall biogenesis; lipoteichoic acid biosynthesis. Functionally, catalyzes the first step in the D-alanylation of lipoteichoic acid (LTA), the activation of D-alanine and its transfer onto the D-alanyl carrier protein (Dcp) DltC. In an ATP-dependent two-step reaction, forms a high energy D-alanyl-AMP intermediate, followed by transfer of the D-alanyl residue as a thiol ester to the phosphopantheinyl prosthetic group of the Dcp. D-alanylation of LTA plays an important role in modulating the properties of the cell wall in Gram-positive bacteria, influencing the net charge of the cell wall. This Staphylococcus epidermidis (strain ATCC 35984 / DSM 28319 / BCRC 17069 / CCUG 31568 / BM 3577 / RP62A) protein is D-alanine--D-alanyl carrier protein ligase.